The chain runs to 215 residues: Nucleoside triphosphate pyrophosphatase (215 aa).

Asp-77 (proton acceptor) is an active-site residue.

This sequence belongs to the Maf family. Requires a divalent metal cation as cofactor.

The protein resides in the cytoplasm. The enzyme catalyses a ribonucleoside 5'-triphosphate + H2O = a ribonucleoside 5'-phosphate + diphosphate + H(+). It carries out the reaction a 2'-deoxyribonucleoside 5'-triphosphate + H2O = a 2'-deoxyribonucleoside 5'-phosphate + diphosphate + H(+). Nucleoside triphosphate pyrophosphatase. May have a dual role in cell division arrest and in preventing the incorporation of modified nucleotides into cellular nucleic acids. The protein is Nucleoside triphosphate pyrophosphatase of Rickettsia africae (strain ESF-5).